A 527-amino-acid polypeptide reads, in one-letter code: MAARCSIAFMVMASCLSVVVSGGLPGDLFAHSVASKLRVDRDTTARASSDFGRIVAAAPEAVLHPATPAEIAELVRFSASSPSPFPVAPRGQGHSARGQSLAPGGVVVDMRALAARRGRVNVSAGGAGAAPYVDAGGEQLWADVLRATLEHGLAPRVWTDYLRITVAGTLSNAGIGGQAFRHGPQIANVLELDVITGRGDMVTCSRDKEPDLFFAVLGGLGQFGIITRARIGLEPAPKRVRWVRLAYSDVVTFTRDQELLISKRASEAGFDYVEGQVQLNRTLTEGPKSTPFFSRFDIDRLAGLASESVSGVIYFIEGAMYYNESTTASVDQKLTSVLEQLSFDKGFVFTKDVSYVQFLDRVREEERILRSIGMWDVPHPWLNLFVPQSRILDFDTGVLKGVFVGANPVGVILMYPMNRNMWDDRMTAVSGNDDMFYVVGLLRSAVVPGDVERLERENEAVLAFCDNEGIGCKQYLPHYASQDGWRSHFGAKWSRVTELKVKYDPYGILSPGQRIFSSLTPMALVAM.

Residues 1–22 (MAARCSIAFMVMASCLSVVVSG) form the signal peptide. An FAD-binding PCMH-type domain is found at 55 to 236 (VAAAPEAVLH…TRARIGLEPA (182 aa)). FAD-binding residues include G91 and G93. H94 bears the Pros-8alpha-FAD histidine mark. The FAD site is built by S95 and Q99. Residue N121 is glycosylated (N-linked (GlcNAc...) asparagine). Positions 160, 165, 171, 175, and 226 each coordinate FAD. 2 N-linked (GlcNAc...) asparagine glycosylation sites follow: N280 and N323. FAD-binding residues include Y475, S510, and Q513.

This sequence belongs to the oxygen-dependent FAD-linked oxidoreductase family. In terms of assembly, monomer. FAD is required as a cofactor.

The protein resides in the secreted. It localises to the extracellular space. It carries out the reaction N(6)-dimethylallyladenine + A + H2O = 3-methyl-2-butenal + adenine + AH2. Functionally, catalyzes the oxidation of cytokinins, a family of N(6)-substituted adenine derivatives that are plant hormones, where the substituent is an isopentenyl group. The chain is Cytokinin dehydrogenase 6 (CKX6) from Oryza sativa subsp. japonica (Rice).